Here is a 112-residue protein sequence, read N- to C-terminus: Ig kappa chain V-II region 2S1.3 (112 aa).

The framework-1 stretch occupies residues 1 to 23 (DIVMTQAAFSNPVTLGTSASFSC). Cysteine 23 and cysteine 93 are joined by a disulfide. The complementarity-determining-1 stretch occupies residues 24 to 39 (RSSKSLQQSKGITYLY). The interval 40–54 (WYLQKPGQSPQLLIY) is framework-2. The interval 55–61 (QMSNLAS) is complementarity-determining-2. Residues 62–93 (GVPDRFSGSGSGTDFTLRISRVEAEDVGVYYC) are framework-3. Positions 94–102 (ANLQELPYT) are complementarity-determining-3. Residues 103 to 112 (FGGGTKLEIK) are framework-4.

This Mus musculus (Mouse) protein is Ig kappa chain V-II region 2S1.3.